Reading from the N-terminus, the 314-residue chain is Mitochondrial thiamine pyrophosphate carrier 1 (314 aa).

The next 6 membrane-spanning stretches (helical) occupy residues 14-30 (VAAW…GLLA), 84-100 (LLYV…YSLF), 116-136 (LVVG…FDVL), 170-186 (GSIA…SIMF), 217-233 (SAGT…TFPL), and 285-302 (GILV…VSFW). Solcar repeat units lie at residues 14 to 103 (VAAW…FNRY), 110 to 195 (EARL…IRIY), and 210 to 310 (ELAT…AIHY).

Belongs to the mitochondrial carrier (TC 2.A.29) family.

Its subcellular location is the mitochondrion inner membrane. In terms of biological role, mitochondrial transporter that mediates uptake of thiamine pyrophosphate (ThPP) into mitochondria. This is Mitochondrial thiamine pyrophosphate carrier 1 (TPC1) from Saccharomyces cerevisiae (strain ATCC 204508 / S288c) (Baker's yeast).